The sequence spans 193 residues: Ion-translocating oxidoreductase complex subunit A (193 aa).

6 helical membrane-spanning segments follow: residues 5-25 (LLLLISTVLVNNFVLVKFLGL), 39-59 (VGMGLATTFVLTLTSAFAYLV), 72-92 (LSTLAFILVIAVVVQFTEMVI), 102-122 (ILGIYLPLITTNCIVLGLALL), 134-154 (VVYGFGGGLGFMLVLILFASL), and 170-190 (IAIGMVTAGLMSLAFLGFTGL).

It belongs to the NqrDE/RnfAE family. As to quaternary structure, the complex is composed of six subunits: RnfA, RnfB, RnfC, RnfD, RnfE and RnfG.

The protein resides in the cell inner membrane. Part of a membrane-bound complex that couples electron transfer with translocation of ions across the membrane. The polypeptide is Ion-translocating oxidoreductase complex subunit A (Tolumonas auensis (strain DSM 9187 / NBRC 110442 / TA 4)).